The chain runs to 439 residues: uncharacterized protein (439 aa).

Residues 273 to 439 form the VWFA domain; the sequence is PIIILLDHSG…EARKIYKSIS (167 aa).

This is an uncharacterized protein from Methanocaldococcus jannaschii (strain ATCC 43067 / DSM 2661 / JAL-1 / JCM 10045 / NBRC 100440) (Methanococcus jannaschii).